The sequence spans 971 residues: 116 kDa U5 small nuclear ribonucleoprotein component (971 aa).

The residue at position 1 (M1) is an N-acetylmethionine. The disordered stretch occupies residues 1-52 (MDTDLYDEFGNYIGPELDSDEDDDELGRETKDLDEDEDEDEDDVGEHEDDHP). Positions 17 to 47 (LDSDEDDDELGRETKDLDEDEDEDEDDVGEH) are enriched in acidic residues. S19 is modified (phosphoserine). A Glycyl lysine isopeptide (Lys-Gly) (interchain with G-Cter in SUMO1); alternate cross-link involves residue K63. K63 is covalently cross-linked (Glycyl lysine isopeptide (Lys-Gly) (interchain with G-Cter in SUMO2); alternate). The residue at position 85 (T85) is a Phosphothreonine. The 283-residue stretch at 126–408 (ELIRNVTLCG…GIHLTKEELK (283 aa)) folds into the tr-type G domain. Residues 135–142 (GHLHHGKT), 203–207 (DTPGH), and 257–260 (NKID) each bind GTP.

Belongs to the TRAFAC class translation factor GTPase superfamily. Classic translation factor GTPase family. EF-G/EF-2 subfamily. As to quaternary structure, component of the U5 snRNP and the U4/U6-U5 tri-snRNP complex, a building block of the spliceosome. The U4/U6-U5 tri-snRNP complex is composed of the U4, U6 and U5 snRNAs and at least PRPF3, PRPF4, PRPF6, PRPF8, PRPF31, SNRNP200, TXNL4A, SNRNP40, DDX23, CD2BP2, PPIH, SNU13, EFTUD2, SART1 and USP39. Component of the pre-catalytic, catalytic and post-catalytic spliceosome complexes. Component of the minor spliceosome, which splices U12-type introns. Within this complex, interacts with CRIPT. Interacts with ERBB4 and PRPF8. Interacts with PIH1D1. Interacts with RPAP3 and URI1 in a ZNHIT2-dependent manner. Interacts with NRDE2. Interacts with FAM50A. Interacts with UBL5.

The protein resides in the nucleus. Its function is as follows. Required for pre-mRNA splicing as component of the spliceosome, including pre-catalytic, catalytic and post-catalytic spliceosomal complexes. Component of the U5 snRNP and the U4/U6-U5 tri-snRNP complex, a building block of the spliceosome. As a component of the minor spliceosome, involved in the splicing of U12-type introns in pre-mRNAs. This is 116 kDa U5 small nuclear ribonucleoprotein component (Eftud2) from Mus musculus (Mouse).